A 236-amino-acid chain; its full sequence is Small ribosomal subunit protein uS2c (236 aa).

It belongs to the universal ribosomal protein uS2 family.

The protein localises to the plastid. It is found in the chloroplast. This chain is Small ribosomal subunit protein uS2c (rps2), found in Agrostis stolonifera (Creeping bentgrass).